We begin with the raw amino-acid sequence, 303 residues long: MDISDELVAEINELRRRRKAIILSHYYQRPEVQDIADFVGDSLQLSRTAAATEAEVIVFCGVHFMAETAAILSPYKTVVLPDLRAGCPMADMAEVESLRSKKAELGDPVVVSYVNTTADVKAESDICCTSANVVRVIESISPDRRILFVPDRNLGAYAARQTGRELVLWPGFCCVHDDILPEHILRAKRKHPEALVVVHPECRPDVIDLADKVASTSGMVQFVRDSSFREFIIGTEEGITHQMGKLCPGKKFYLPSRGMVCGSMKLITLTKVRDALKRLEPRITVPEHIRYRALQSLERMLAL.

Iminosuccinate contacts are provided by H25 and S42. Residue C87 participates in [4Fe-4S] cluster binding. Iminosuccinate contacts are provided by residues 113 to 115 and S130; that span reads YVN. C173 is a binding site for [4Fe-4S] cluster. Iminosuccinate contacts are provided by residues 199 to 201 and T216; that span reads HPE. C261 provides a ligand contact to [4Fe-4S] cluster.

This sequence belongs to the quinolinate synthase family. Type 2 subfamily. The cofactor is [4Fe-4S] cluster.

It localises to the cytoplasm. The enzyme catalyses iminosuccinate + dihydroxyacetone phosphate = quinolinate + phosphate + 2 H2O + H(+). It participates in cofactor biosynthesis; NAD(+) biosynthesis; quinolinate from iminoaspartate: step 1/1. Catalyzes the condensation of iminoaspartate with dihydroxyacetone phosphate to form quinolinate. The protein is Quinolinate synthase of Desulforudis audaxviator (strain MP104C).